Reading from the N-terminus, the 249-residue chain is MTILFLTMVISYFGCMKAAPMKEANVHGQGNLAYPAVRTHGTLESVNGPRAGSRGLTTTSLADTFEHVIEELLDEDQKVRPNEENHKDADLYTSRVMLSSQVPLEPPLLFLLEEYKNYLDAANMSMRVRRHSDPARRGELSVCDSISEWVTAADKKTAVDMSGGTVTVLEKVPVSKGQLKQYFYETKCNPMGYTKEGCRGIDKRHWNSQCRTTQSYVRALTMDSKKRIGWRFIRIDTSCVCTLTIKRGR.

Residues 1 to 18 (MTILFLTMVISYFGCMKA) form the signal peptide. Positions 19–130 (APMKEANVHG…AANMSMRVRR (112 aa)) are excised as a propeptide. Asn-123 carries N-linked (GlcNAc...) asparagine glycosylation. 3 disulfide bridges follow: Cys-143–Cys-210, Cys-188–Cys-239, and Cys-198–Cys-241.

The protein belongs to the NGF-beta family. In terms of assembly, monomers and homodimers. Binds to NTRK2/TRKB. Can form heterodimers with other neurotrophin family members, such as NTF3 and NTF4 (in vitro), but the physiological relevance of this is not clear. BDNF precursor form: interacts with the heterodimer formed by NGFR and SORCS2. Mature BDNF has much lower affinity for the heterodimer formed by NGFR and SORCS2. In terms of processing, N-glycosylated and glycosulfated, contrary to mature BDNF. Post-translationally, mature BDNF is produced by proteolytic removal of the propeptide, catalyzed by a FURIN family member. In addition, the precursor form is proteolytically cleaved within the propeptide, but this is not an obligatory intermediate for the production of mature BDNF. Can be converted into mature BDNF by plasmin (PLG).

It is found in the secreted. In terms of biological role, important signaling molecule that activates signaling cascades downstream of NTRK2. During development, promotes the survival and differentiation of selected neuronal populations of the peripheral and central nervous systems. Participates in axonal growth, pathfinding and in the modulation of dendritic growth and morphology. Major regulator of synaptic transmission and plasticity at adult synapses in many regions of the CNS. The versatility of BDNF is emphasized by its contribution to a range of adaptive neuronal responses including long-term potentiation (LTP), long-term depression (LTD), certain forms of short-term synaptic plasticity, as well as homeostatic regulation of intrinsic neuronal excitability. Its function is as follows. Important signaling molecule that activates signaling cascades downstream of NTRK2. Activates signaling cascades via the heterodimeric receptor formed by NGFR and SORCS2. Signaling via NGFR and SORCS2 plays a role in synaptic plasticity and long-term depression (LTD). Binding to NGFR and SORCS2 promotes neuronal apoptosis. Promotes neuronal growth cone collapse. The chain is Neurotrophic factor BDNF precursor form (Bdnf) from Rattus norvegicus (Rat).